The sequence spans 673 residues: Acetoacetyl-CoA synthetase (673 aa).

Belongs to the ATP-dependent AMP-binding enzyme family.

The protein resides in the cytoplasm. It localises to the cytosol. The enzyme catalyses acetoacetate + ATP + CoA = acetoacetyl-CoA + AMP + diphosphate. Its function is as follows. Converts acetoacetate to acetoacetyl-CoA in the cytosol. Ketone body-utilizing enzyme, responsible for the synthesis of cholesterol and fatty acids. The chain is Acetoacetyl-CoA synthetase (aacs) from Danio rerio (Zebrafish).